A 124-amino-acid polypeptide reads, in one-letter code: Small ribosomal subunit protein uS12 (124 aa).

Position 89 is a 3-methylthioaspartic acid (Asp89). Residues 104–124 (ATGVKDRKQGRSKYGAKRPKE) form a disordered region. Positions 113–124 (GRSKYGAKRPKE) are enriched in basic residues.

Belongs to the universal ribosomal protein uS12 family. In terms of assembly, part of the 30S ribosomal subunit. Contacts proteins S8 and S17. May interact with IF1 in the 30S initiation complex.

In terms of biological role, with S4 and S5 plays an important role in translational accuracy. Functionally, interacts with and stabilizes bases of the 16S rRNA that are involved in tRNA selection in the A site and with the mRNA backbone. Located at the interface of the 30S and 50S subunits, it traverses the body of the 30S subunit contacting proteins on the other side and probably holding the rRNA structure together. The combined cluster of proteins S8, S12 and S17 appears to hold together the shoulder and platform of the 30S subunit. The sequence is that of Small ribosomal subunit protein uS12 from Picosynechococcus sp. (strain ATCC 27264 / PCC 7002 / PR-6) (Agmenellum quadruplicatum).